The primary structure comprises 304 residues: Coenzyme PQQ synthesis protein B (304 aa).

This sequence belongs to the PqqB family.

It functions in the pathway cofactor biosynthesis; pyrroloquinoline quinone biosynthesis. Functionally, may be involved in the transport of PQQ or its precursor to the periplasm. This is Coenzyme PQQ synthesis protein B from Pseudomonas aeruginosa (strain LESB58).